A 265-amino-acid polypeptide reads, in one-letter code: U6 snRNA phosphodiesterase 1 (265 aa).

The tract at residues 1–22 (MSLVCYESSSSGEDDDETISDN) is disordered. Residue His109 is the Proton acceptor of the active site. Residues 109 to 111 (HLS) and 195 to 201 (DFLLHIS) each bind AMP. 197 to 201 (LLHIS) lines the UMP pocket. His199 serves as the catalytic Proton donor.

The protein belongs to the 2H phosphoesterase superfamily. USB1 family.

Its subcellular location is the nucleus. It catalyses the reaction a 3'-end uridylyl-uridine-RNA = a 3'-end 2',3'-cyclophospho-uridine-RNA + uridine. Functionally, 3'-5' RNA exonuclease that trims the 3' end of oligo(U) tracts of the pre-U6 small nuclear RNA (snRNA) molecule, leading to the formation of a U6 snRNA 3' end-terminated with a 2',3'-cyclic phosphate.d. Participates in the U6 snRNA 3' end processing that prevents U6 snRNA degradation. The protein is U6 snRNA phosphodiesterase 1 of Schizosaccharomyces pombe (strain 972 / ATCC 24843) (Fission yeast).